The following is a 331-amino-acid chain: ADP-L-glycero-D-manno-heptose-6-epimerase (331 aa).

NADP(+) is bound by residues 11 to 12, 32 to 33, Lys-39, Lys-54, 75 to 79, and Asn-92; these read FI, DN, and LGACT. The Proton acceptor role is filled by Tyr-139. Lys-143 contacts NADP(+). Asn-168 contributes to the substrate binding site. The NADP(+) site is built by Val-169 and Lys-177. Lys-177 functions as the Proton acceptor in the catalytic mechanism. Residues Arg-179, Gln-186, 200-203, His-213, and Tyr-292 contribute to the substrate site; that span reads FGEH.

It belongs to the NAD(P)-dependent epimerase/dehydratase family. HldD subfamily. As to quaternary structure, homopentamer. Requires NADP(+) as cofactor.

The enzyme catalyses ADP-D-glycero-beta-D-manno-heptose = ADP-L-glycero-beta-D-manno-heptose. Its pathway is nucleotide-sugar biosynthesis; ADP-L-glycero-beta-D-manno-heptose biosynthesis; ADP-L-glycero-beta-D-manno-heptose from D-glycero-beta-D-manno-heptose 7-phosphate: step 4/4. In terms of biological role, catalyzes the interconversion between ADP-D-glycero-beta-D-manno-heptose and ADP-L-glycero-beta-D-manno-heptose via an epimerization at carbon 6 of the heptose. The polypeptide is ADP-L-glycero-D-manno-heptose-6-epimerase (Cupriavidus pinatubonensis (strain JMP 134 / LMG 1197) (Cupriavidus necator (strain JMP 134))).